A 243-amino-acid chain; its full sequence is Phosphoadenosine 5'-phosphosulfate reductase (243 aa).

Cys-239 serves as the catalytic Nucleophile; cysteine thiosulfonate intermediate.

The protein belongs to the PAPS reductase family. CysH subfamily.

The protein localises to the cytoplasm. It carries out the reaction [thioredoxin]-disulfide + sulfite + adenosine 3',5'-bisphosphate + 2 H(+) = [thioredoxin]-dithiol + 3'-phosphoadenylyl sulfate. It participates in sulfur metabolism; hydrogen sulfide biosynthesis; sulfite from sulfate: step 3/3. Catalyzes the formation of sulfite from phosphoadenosine 5'-phosphosulfate (PAPS) using thioredoxin as an electron donor. This chain is Phosphoadenosine 5'-phosphosulfate reductase, found in Proteus mirabilis (strain HI4320).